The chain runs to 821 residues: MSSNGGSNTNERSVGPDSGSLRSNSNLSSVNGDGSDSGSTRFRHRKISVKQRLRIHLPSDLKNLDKNEIQKRELLDVETGVEKNEEKEVHLHRILQKASVLEHLNSKKDYIPTPDASKTWSDYDKFYSGKFVETQAYVKFSVTVEDCCGVPYTLDEIDDDFLENSLNKNSDLKLNEDEFESLCSAFETAIKERQPFLQMDPETILTFDEVKPTLLKVDFNNMHLRSQLAQEVAAIHNPQTANSSSDGNGPFTTVFDSSTTANVRPIPELIEKYGKEVYEHWSRRKIEAKGAEIFPQLKFERPGEKEEVDPYVCFRRRELRHPRKTRRVDILNSQKLRILLKELRHAKDMSLLVAQREQINLQLIEDDLKILNKRKHVISIKRKLDIKGEDEDLINHKRKRPTIMTIEKKRQQEEALAAAKRAAEQEKAAAAAKAAEAKNKSKAQKKQNEQAAKVKSSKQKNSSSQDLTKKVTQEESQSEEQQPAMSHVYVKLPSSKIPDIVLEDVEKLLQNKEKSARRFVQERMARRKLEDNDEFINLTDDPHNPVFDLTTLNCSEVPFSPFSSIASSKLKINKSFYLRDLNDYLNGIATDLKVFNKDGEKIEDNKTASGNQNVRKTEVYNPFDSGSELHSREYPVKFRRRFGRGNIEYLDVKRKIDNFSDTRFCEFIDFKAIENQELENNGRNLDVYESRADEFSRLLEKWKFDSTNNEYGLRFSDEPARLNQISNDTQVIRFGTMLGTKSYEQLKEATIRYRKDYISRIRQQKLNAQKQQQILQQQQFLQQQQENGSPNNATMPINPINKSTLKQDVASNVLVGTQQKS.

Positions 1 to 12 (MSSNGGSNTNER) are enriched in polar residues. Disordered regions lie at residues 1 to 43 (MSSN…TRFR), 427 to 485 (KAAA…QPAM), and 779 to 799 (QFLQ…PINP). Low complexity-rich tracts occupy residues 18-39 (SGSL…DSGS) and 449-465 (EQAA…SSSQ). The segment covering 786-799 (ENGSPNNATMPINP) has biased composition (polar residues).

Belongs to the enhancer of polycomb family. Component of the NuA4 histone acetyltransferase complex.

The protein localises to the nucleus. Component of the NuA4 histone acetyltransferase complex which is involved in transcriptional activation of selected genes principally by acetylation of nucleosomal histone H4 and H2A. The NuA4 complex is also involved in DNA repair. Involved in gene silencing by neighboring heterochromatin, blockage of the silencing spreading along the chromosome, and required for cell cycle progression through G2/M. The protein is Enhancer of polycomb-like protein 1 (EPL1) of Candida glabrata (strain ATCC 2001 / BCRC 20586 / JCM 3761 / NBRC 0622 / NRRL Y-65 / CBS 138) (Yeast).